The following is a 350-amino-acid chain: Peroxidase 10 (350 aa).

The first 27 residues, 1 to 27 (MDHKMSMYLFVSYLAIFTLFFKGFVSS), serve as a signal peptide directing secretion. 4 disulfide bridges follow: Cys-57/Cys-137, Cys-90/Cys-95, Cys-143/Cys-346, and Cys-222/Cys-256. His-88 serves as the catalytic Proton acceptor. Asp-89, Val-92, Gly-94, Asp-96, and Ser-98 together coordinate Ca(2+). N-linked (GlcNAc...) asparagine glycosylation occurs at Asn-102. A substrate-binding site is contributed by Pro-185. Residue Asn-193 is glycosylated (N-linked (GlcNAc...) asparagine). His-215 contacts heme b. Ca(2+) is bound at residue Thr-216. Ca(2+)-binding residues include Asp-270, Ser-273, and Asp-278.

The protein belongs to the peroxidase family. Classical plant (class III) peroxidase subfamily. Heme b serves as cofactor. The cofactor is Ca(2+). Expressed in the whole plant, with the highest expression in roots.

The protein resides in the secreted. The enzyme catalyses 2 a phenolic donor + H2O2 = 2 a phenolic radical donor + 2 H2O. Its function is as follows. Removal of H(2)O(2), oxidation of toxic reductants, biosynthesis and degradation of lignin, suberization, auxin catabolism, response to environmental stresses such as wounding, pathogen attack and oxidative stress. These functions might be dependent on each isozyme/isoform in each plant tissue. This is Peroxidase 10 (PER10) from Arabidopsis thaliana (Mouse-ear cress).